Reading from the N-terminus, the 117-residue chain is Cell division protein FtsB (117 aa).

Residues 1 to 6 (MRDWRW) lie on the Cytoplasmic side of the membrane. Residues 7–24 (MLLVLALLLGWLQYRFWF) traverse the membrane as a helical segment. The Periplasmic portion of the chain corresponds to 25–117 (GPGNSGEVMM…QVGEHPADVP (93 aa)). Residues 29 to 69 (SGEVMMLEAQVTNQERDNEGLQQRNDALAAEVKDLKEGQSA) are a coiled coil.

It belongs to the FtsB family. In terms of assembly, part of a complex composed of FtsB, FtsL and FtsQ.

The protein localises to the cell inner membrane. Essential cell division protein. May link together the upstream cell division proteins, which are predominantly cytoplasmic, with the downstream cell division proteins, which are predominantly periplasmic. The sequence is that of Cell division protein FtsB from Stenotrophomonas maltophilia (strain R551-3).